The following is a 194-amino-acid chain: WASH complex subunit 3 (194 aa).

At methionine 1 the chain carries N-acetylmethionine. The stretch at 46 to 74 (TVCEEKLADLSLRIQQIETTLNILDAKLS) forms a coiled coil. The span at 98–123 (THSEATSEQSQQNSLQDSGPQESEVT) shows a compositional bias: polar residues. 2 disordered regions span residues 98 to 125 (THSE…VTPE) and 158 to 194 (SEGL…SFSD).

The protein belongs to the CCDC53 family. As to quaternary structure, component of the WASH core complex also described as WASH regulatory complex (SHRC) composed of WASHC1, WASHC2, WASHC3, WASHC4 and WASHC5. The WASH core complex associates via WASHC2 with the F-actin-capping protein dimer (formed by CAPZA1, CAPZA2 or CAPZA3 and CAPZB) in a transient or substoichiometric manner which was initially described as WASH complex.

The protein resides in the early endosome. In terms of biological role, acts as a component of the WASH core complex that functions as a nucleation-promoting factor (NPF) at the surface of endosomes, where it recruits and activates the Arp2/3 complex to induce actin polymerization, playing a key role in the fission of tubules that serve as transport intermediates during endosome sorting. The sequence is that of WASH complex subunit 3 from Bos taurus (Bovine).